We begin with the raw amino-acid sequence, 431 residues long: Serine/threonine-protein kinase Sgk1 (431 aa).

The disordered stretch occupies residues 58–93 (LNLTPPQDPELMNSNPSPPPSPSQQINLGPSSNPSA). Residues 81–93 (QQINLGPSSNPSA) are compositionally biased toward polar residues. In terms of domain architecture, Protein kinase spans 98-355 (FHFLKVIGKG…FTEIKNHVFF (258 aa)). Residues 104 to 112 (IGKGSFGKV) and Lys-127 contribute to the ATP site. The active-site Proton acceptor is Asp-222. The AGC-kinase C-terminal domain occupies 356–431 (SPINWDDLNA…SYAPSMDSYL (76 aa)).

Belongs to the protein kinase superfamily. AGC Ser/Thr protein kinase family.

It is found in the cytoplasm. The protein localises to the nucleus. Its subcellular location is the endoplasmic reticulum. It carries out the reaction L-seryl-[protein] + ATP = O-phospho-L-seryl-[protein] + ADP + H(+). The catalysed reaction is L-threonyl-[protein] + ATP = O-phospho-L-threonyl-[protein] + ADP + H(+). Protein kinase that may play an important role in cellular stress response. May be involved in the regulation of processes such as cell survival, neuronal excitability and renal sodium excretion. This is Serine/threonine-protein kinase Sgk1 (sgk1) from Fundulus heteroclitus (Killifish).